The chain runs to 165 residues: Cytochrome c-type biogenesis protein CcmE (165 aa).

Residues 1–29 (MSATAEQNARNPKGKGGFARTVSQRKRKR) are Cytoplasmic-facing. Residues 30 to 50 (LFLIGGALAVLAVAVGLMLTA) traverse the membrane as a helical; Signal-anchor for type II membrane protein segment. Residues 51-165 (FNQDIRFFRT…LKKKGVWEGK (115 aa)) lie on the Periplasmic side of the membrane. 2 residues coordinate heme: H143 and Y147.

Belongs to the CcmE/CycJ family.

It localises to the cell inner membrane. Its function is as follows. Heme chaperone required for the biogenesis of c-type cytochromes. Transiently binds heme delivered by CcmC and transfers the heme to apo-cytochromes in a process facilitated by CcmF and CcmH. In Brucella abortus (strain S19), this protein is Cytochrome c-type biogenesis protein CcmE.